The primary structure comprises 250 residues: uncharacterized protein (250 aa).

Positions 15, 17, 36, 56, 57, and 82 each coordinate NAD(+). Substrate is bound at residue S143. Y156, K160, F189, and T191 together coordinate NAD(+). Y156 (proton acceptor) is an active-site residue.

Belongs to the short-chain dehydrogenases/reductases (SDR) family.

This is an uncharacterized protein from Mycobacterium tuberculosis (strain CDC 1551 / Oshkosh).